A 328-amino-acid chain; its full sequence is MAKIYTDREASLEPLKGKTIAVIGYGIQGRAQALNLRDSGLEVIIGLRRGGKSWELATSEGFRVYEIGEAVRKADVILVLIPDMEQPKVWQEQIAPNLKEGVVVDFAHGFNVHFGLIKPPKNIDVIMVAPKAPGKAVREEYLAGRGVPALVAVYQDYSGSALKYALALAKGIGATRAGVIETTFAEETETDLIGEQIVLVGGLMELIKKGFEVLVEMGYQPEVAYFEVLNEAKLIMDLIWQRGIYGMLNGVSDTAKYGGLTVGPRVIDENVKRKMKEAAMRVKSGEFAKEWVEEYNRGAPTLRKLMEEARTHPIEKVGEEMRKLLFGP.

A KARI N-terminal Rossmann domain is found at 2 to 182; sequence AKIYTDREAS…GATRAGVIET (181 aa). Residues 25–28, arginine 48, serine 53, and 83–86 contribute to the NADP(+) site; these read YGIQ and DMEQ. Histidine 108 is a catalytic residue. An NADP(+)-binding site is contributed by glycine 134. A KARI C-terminal knotted domain is found at 183 to 328; that stretch reads TFAEETETDL…EEMRKLLFGP (146 aa). Positions 191, 195, 227, and 231 each coordinate Mg(2+). Residue serine 252 coordinates substrate.

Belongs to the ketol-acid reductoisomerase family. Mg(2+) serves as cofactor.

The catalysed reaction is (2R)-2,3-dihydroxy-3-methylbutanoate + NADP(+) = (2S)-2-acetolactate + NADPH + H(+). It carries out the reaction (2R,3R)-2,3-dihydroxy-3-methylpentanoate + NADP(+) = (S)-2-ethyl-2-hydroxy-3-oxobutanoate + NADPH + H(+). It participates in amino-acid biosynthesis; L-isoleucine biosynthesis; L-isoleucine from 2-oxobutanoate: step 2/4. The protein operates within amino-acid biosynthesis; L-valine biosynthesis; L-valine from pyruvate: step 2/4. Its function is as follows. Involved in the biosynthesis of branched-chain amino acids (BCAA). Catalyzes an alkyl-migration followed by a ketol-acid reduction of (S)-2-acetolactate (S2AL) to yield (R)-2,3-dihydroxy-isovalerate. In the isomerase reaction, S2AL is rearranged via a Mg-dependent methyl migration to produce 3-hydroxy-3-methyl-2-ketobutyrate (HMKB). In the reductase reaction, this 2-ketoacid undergoes a metal-dependent reduction by NADPH to yield (R)-2,3-dihydroxy-isovalerate. The protein is Ketol-acid reductoisomerase (NADP(+)) of Pyrobaculum aerophilum (strain ATCC 51768 / DSM 7523 / JCM 9630 / CIP 104966 / NBRC 100827 / IM2).